The chain runs to 464 residues: Protein FAM90A11 (464 aa).

Disordered regions lie at residues 1-42 (MMAR…DPRL), 70-389 (PATL…HDGA), and 415-437 (HSPE…SEAP). 2 stretches are compositionally biased toward basic and acidic residues: residues 74-89 (GKKE…KPRV) and 97-114 (NKDK…DPQR). A compositionally biased stretch (low complexity) spans 180-197 (LASLSPLRKASLSSSSSL). Over residues 341–356 (GPSTSPQMGRRTSAQV) the composition is skewed to polar residues.

The protein belongs to the FAM90 family.

In Homo sapiens (Human), this protein is Protein FAM90A11.